The primary structure comprises 1304 residues: TPR-containing protein DDB_G0280363 (1304 aa).

Disordered regions lie at residues 19–85, 153–195, 296–334, 447–477, 576–687, and 706–728; these read QQHH…HPQQ, NINN…NSSL, LPST…YTQQ, GFNW…QRQQ, QNQQ…VTTI, and LTTV…VESP. Low complexity-rich tracts occupy residues 25–44, 52–85, and 153–194; these read QQNN…QFNQ, HQQH…HPQQ, and NINN…NNSS. The segment covering 296–306 has biased composition (polar residues); sequence LPSTNSSIVSR. Residues 307–316 are compositionally biased toward low complexity; sequence QQQLQQQQQK. A compositionally biased stretch (polar residues) spans 448–465; that stretch reads FNWSPSLQPDQSTSTNHT. Low complexity-rich tracts occupy residues 466 to 477 and 576 to 597; these read QAMLQQQQQRQQ and QNQQ…PNQH. The span at 598 to 625 shows a compositional bias: basic residues; sequence HGQHQHNQHNQHHNQHHNQSHPNHKNQH. The span at 626 to 687 shows a compositional bias: low complexity; sequence QKQNQTQQST…NNNTNNVTTI (62 aa). TPR repeat units follow at residues 769–802, 899–932, 978–1011, 1046–1079, 1084–1111, 1112–1150, and 1152–1184; these read WRVY…QPYI, MKHV…VEKG, WKIY…CPEN, SKLR…AHVE, WKVF…KESL, KIHS…VPKS, and EVWC…TPQF.

This chain is TPR-containing protein DDB_G0280363, found in Dictyostelium discoideum (Social amoeba).